The chain runs to 205 residues: Protein phosphatase inhibitor 2 family member C (205 aa).

Disordered regions lie at residues 1 to 51 (MSAS…DESS) and 70 to 114 (EPGT…DHSC). The interval 12–17 (KGILKN) is required for binding PPP1CC. A compositionally biased stretch (low complexity) spans 19–34 (SSSGSSVATSGQQSGG). Residues 43-55 (KSQKWDESSILAT) are required for binding PPP1CC. Residues 84–102 (DSVRDVEGEDSVRGVEGKE) are compositionally biased toward basic and acidic residues. Residues 147 to 150 (HYNE) form a required for binding PPP1CC catalytic center, displacing metal ions and inhibition of PPP1CC catalytic activity region. The tract at residues 165–205 (LQSEDDENEERPQATNEEKTAAEESEEAPLSGGLQTQSCDP) is disordered. The segment covering 174–186 (ERPQATNEEKTAA) has biased composition (basic and acidic residues).

The protein belongs to the protein phosphatase inhibitor 2 family.

In terms of biological role, functions as a protein phosphatase inhibitor. It inhibits activity of the catalytic subunit of PP1 and weakly inhibits the activity of myosin-associated phosphates. The chain is Protein phosphatase inhibitor 2 family member C (PPP1R2C) from Macaca fascicularis (Crab-eating macaque).